A 544-amino-acid chain; its full sequence is Lysophosphatidylcholine acyltransferase 2 (544 aa).

Topologically, residues 1–58 (MNRCAEAAAVAATVPGSGVGDSGLRPPMVPRQASFFPPPVPNPFVQQTRISAARRLQM) are cytoplasmic. The chain crosses the membrane as a helical; Signal-anchor for type II membrane protein span at residues 59-79 (ILLGIILLPVRALLVGLVLLL). Over 80-544 (AWPFAVISTV…EEGTSGKKVD (465 aa)) the chain is Lumenal. The short motif at 146–151 (HSTFFD) is the HXXXXD motif element. The EGTC motif signature appears at 220–223 (EGTC). EF-hand domains lie at 391-426 (PVSDVLRQLFALFDRNNDGSIDFREYVIGLAVLCNP) and 428-463 (NTEDIIQVAFKLFDVDEDGYITEEEFCTILQASLGV). Ca(2+)-binding residues include Asp404, Asn406, Asp408, Ser410, Glu415, Asp441, Asp443, Asp445, Tyr447, and Glu452. Residues 520–530 (TAPSVASNKVS) show a composition bias toward polar residues. The interval 520 to 544 (TAPSVASNKVSPESHEEGTSGKKVD) is disordered. Residues 531 to 544 (PESHEEGTSGKKVD) show a composition bias toward basic and acidic residues.

This sequence belongs to the 1-acyl-sn-glycerol-3-phosphate acyltransferase family.

The protein localises to the endoplasmic reticulum membrane. Its subcellular location is the golgi apparatus membrane. It localises to the cell membrane. The protein resides in the lipid droplet. It carries out the reaction a 1-acyl-sn-glycero-3-phosphocholine + an acyl-CoA = a 1,2-diacyl-sn-glycero-3-phosphocholine + CoA. The catalysed reaction is a 1-O-alkyl-sn-glycero-3-phosphocholine + acetyl-CoA = a 1-O-alkyl-2-acetyl-sn-glycero-3-phosphocholine + CoA. It catalyses the reaction a 1-acyl-sn-glycero-3-phosphate + an acyl-CoA = a 1,2-diacyl-sn-glycero-3-phosphate + CoA. The enzyme catalyses a 1-O-(1Z-alkenyl)-sn-glycero-3-phosphocholine + an acyl-CoA = a 1-O-(1Z-alkenyl)-2-acyl-sn-glycero-3-phosphocholine + CoA. It carries out the reaction 1-hexadecanoyl-sn-glycero-3-phosphate + (9Z)-octadecenoyl-CoA = 1-hexadecanoyl-2-(9Z-octadecenoyl)-sn-glycero-3-phosphate + CoA. The catalysed reaction is 1-(9Z-octadecenoyl)-sn-glycero-3-phosphate + (9Z)-octadecenoyl-CoA = 1,2-di-(9Z-octadecenoyl)-sn-glycero-3-phosphate + CoA. It catalyses the reaction 1-(9Z-octadecenoyl)-sn-glycero-3-phosphate + hexadecanoyl-CoA = 1-(9Z)-octadecenoyl-2-hexadecanoyl-sn-glycero-3-phosphate + CoA. The enzyme catalyses 1-heptadecanoyl-sn-glycero-3-phosphate + (9Z)-octadecenoyl-CoA = 1-heptadecanoyl-2-(9Z)-octadecenoyl-sn-glycero-3-phosphate + CoA. It carries out the reaction 1-octadecanoyl-sn-glycero-3-phosphate + (9Z)-octadecenoyl-CoA = 1-octadecanoyl-2-(9Z-octadecenoyl)-sn-glycero-3-phosphate + CoA. The catalysed reaction is heptadecanoyl-CoA + 1-(9Z-octadecenoyl)-sn-glycero-3-phosphate = 1-(9Z)-octadecenoyl-2-heptadecanoyl-sn-glycero-3-phosphate + CoA. It catalyses the reaction 1-(9Z-octadecenoyl)-sn-glycero-3-phosphate + (9Z,12Z)-octadecadienoyl-CoA = 1-(9Z)-octadecenoyl-2-(9Z,12Z)-octadecadienoyl-sn-glycero-3-phosphate + CoA. The enzyme catalyses 1-(9Z-octadecenoyl)-sn-glycero-3-phosphate + tetradecanoyl-CoA = 1-(9Z)-octadecenoyl-2-tetradecanoyl-sn-glycero-3-phosphate + CoA. It carries out the reaction pentadecanoyl-CoA + 1-(9Z-octadecenoyl)-sn-glycero-3-phosphate = 1-(9Z)-octadecenoyl-2-pentadecanoyl-sn-glycero-3-phosphate + CoA. The catalysed reaction is nonadecanoyl-CoA + 1-(9Z-octadecenoyl)-sn-glycero-3-phosphate = 1-(9Z)-octadecenoyl-2-nonadecanoyl-sn-glycero-3-phosphate + CoA. It catalyses the reaction 1-hexadecanoyl-sn-glycero-3-phosphocholine + (9Z)-octadecenoyl-CoA = 1-hexadecanoyl-2-(9Z-octadecenoyl)-sn-glycero-3-phosphocholine + CoA. The enzyme catalyses 1-O-hexadecyl-sn-glycero-3-phosphocholine + acetyl-CoA = 1-O-hexadecyl-2-acetyl-sn-glycero-3-phosphocholine + CoA. It carries out the reaction 1-O-octadecyl-sn-glycero-3-phosphocholine + acetyl-CoA = 1-O-octadecyl-2-acetyl-sn-glycero-3-phosphocholine + CoA. The catalysed reaction is 1-hexadecanoyl-sn-glycero-3-phosphocholine + acetyl-CoA = 1-hexadecanoyl-2-acetyl-sn-glycero-3-phosphocholine + CoA. It catalyses the reaction 1-octadecanoyl-sn-glycero-3-phosphocholine + acetyl-CoA = 1-octadecanoyl-2-acetyl-sn-glycero-3-phosphocholine + CoA. The enzyme catalyses a 1-O-(1Z-alkenyl)-sn-glycero-3-phosphocholine + acetyl-CoA = 1-O-(1Z)-alkenyl-2-acetyl-sn-glycero-3-phosphocholine + CoA. It carries out the reaction 1-O-octadecyl-sn-glycero-3-phosphocholine + (5Z,8Z,11Z,14Z)-eicosatetraenoyl-CoA = 1-O-octadecyl-2-(5Z,8Z,11Z,14Z)-eicosatetraenoyl-sn-glycero-3-phosphocholine + CoA. It participates in lipid metabolism; phospholipid metabolism. Functionally, exhibits both acyltransferase and acetyltransferase activities. Activity is calcium-dependent. Catalyzes the conversion of lysophosphatidylcholine (1-acyl-sn-glycero-3-phosphocholine or LPC) into phosphatidylcholine (1,2-diacyl-sn-glycero-3-phosphocholine or PC). Catalyzes the conversion 1-acyl-sn-glycerol-3-phosphate (lysophosphatidic acid or LPA) into 1,2-diacyl-sn-glycerol-3-phosphate (phosphatidic acid or PA) by incorporating an acyl moiety at the sn-2 position of the glycerol backbone. Involved in platelet-activating factor (PAF) biosynthesis by catalyzing the conversion of the PAF precursor, 1-O-alkyl-sn-glycero-3-phosphocholine (lyso-PAF) into 1-O-alkyl-2-acetyl-sn-glycero-3-phosphocholine (PAF). Also converts lyso-PAF to 1-O-alkyl-2-acyl-sn-glycero-3-phosphocholine (PC), a major component of cell membranes and a PAF precursor. Under resting conditions, acyltransferase activity is preferred. Upon acute inflammatory stimulus, acetyltransferase activity is enhanced and PAF synthesis increases. Involved in the regulation of lipid droplet number and size. The chain is Lysophosphatidylcholine acyltransferase 2 (Lpcat2) from Rattus norvegicus (Rat).